Here is a 66-residue protein sequence, read N- to C-terminus: DNA-directed RNA polymerase subunit Rpo10 (66 aa).

4 residues coordinate Zn(2+): cysteine 7, cysteine 10, cysteine 44, and cysteine 45.

Belongs to the archaeal Rpo10/eukaryotic RPB10 RNA polymerase subunit family. As to quaternary structure, part of the RNA polymerase complex. The cofactor is Zn(2+).

It localises to the cytoplasm. It catalyses the reaction RNA(n) + a ribonucleoside 5'-triphosphate = RNA(n+1) + diphosphate. DNA-dependent RNA polymerase (RNAP) catalyzes the transcription of DNA into RNA using the four ribonucleoside triphosphates as substrates. The sequence is that of DNA-directed RNA polymerase subunit Rpo10 from Pyrobaculum islandicum (strain DSM 4184 / JCM 9189 / GEO3).